The chain runs to 164 residues: Cytochrome c oxidase subunit 4, mitochondrial (164 aa).

The transit peptide at 1-33 (MFMNSMLRVSRQRAAVRSTVSLYRGFVSASIRR) directs the protein to the mitochondrion. Positions 120, 128, 143, and 146 each coordinate Zn(2+).

It belongs to the cytochrome c oxidase subunit 5B family. Component of the cytochrome c oxidase (complex IV, CIV), a multisubunit enzyme composed of a catalytic core of 3 subunits and several supernumerary subunits. The complex exists as a monomer or a dimer and forms supercomplexes (SCs) in the inner mitochondrial membrane with ubiquinol-cytochrome c oxidoreductase (cytochrome b-c1 complex, complex III, CIII).

It localises to the mitochondrion inner membrane. Its pathway is energy metabolism; oxidative phosphorylation. In terms of biological role, component of the cytochrome c oxidase, the last enzyme in the mitochondrial electron transport chain which drives oxidative phosphorylation. The respiratory chain contains 3 multisubunit complexes succinate dehydrogenase (complex II, CII), ubiquinol-cytochrome c oxidoreductase (cytochrome b-c1 complex, complex III, CIII) and cytochrome c oxidase (complex IV, CIV), that cooperate to transfer electrons derived from NADH and succinate to molecular oxygen, creating an electrochemical gradient over the inner membrane that drives transmembrane transport and the ATP synthase. Cytochrome c oxidase is the component of the respiratory chain that catalyzes the reduction of oxygen to water. Electrons originating from reduced cytochrome c in the intermembrane space (IMS) are transferred via the dinuclear copper A center (CU(A)) of subunit 2 and heme A of subunit 1 to the active site in subunit 1, a binuclear center (BNC) formed by heme A3 and copper B (CU(B)). The BNC reduces molecular oxygen to 2 water molecules using 4 electrons from cytochrome c in the IMS and 4 protons from the mitochondrial matrix. In Schizosaccharomyces pombe (strain 972 / ATCC 24843) (Fission yeast), this protein is Cytochrome c oxidase subunit 4, mitochondrial (cox4).